The sequence spans 378 residues: Queuine tRNA-ribosyltransferase (378 aa).

The active-site Proton acceptor is aspartate 90. Substrate-binding positions include 90-94 (DSGGY), aspartate 152, glutamine 194, and glycine 223. An RNA binding region spans residues 254–260 (GVGKPED). Aspartate 273 functions as the Nucleophile in the catalytic mechanism. The interval 278–282 (TRNAR) is RNA binding; important for wobble base 34 recognition. Zn(2+)-binding residues include cysteine 311, cysteine 313, cysteine 316, and histidine 342.

This sequence belongs to the queuine tRNA-ribosyltransferase family. In terms of assembly, homodimer. Within each dimer, one monomer is responsible for RNA recognition and catalysis, while the other monomer binds to the replacement base PreQ1. Requires Zn(2+) as cofactor.

It carries out the reaction 7-aminomethyl-7-carbaguanine + guanosine(34) in tRNA = 7-aminomethyl-7-carbaguanosine(34) in tRNA + guanine. Its pathway is tRNA modification; tRNA-queuosine biosynthesis. Its function is as follows. Catalyzes the base-exchange of a guanine (G) residue with the queuine precursor 7-aminomethyl-7-deazaguanine (PreQ1) at position 34 (anticodon wobble position) in tRNAs with GU(N) anticodons (tRNA-Asp, -Asn, -His and -Tyr). Catalysis occurs through a double-displacement mechanism. The nucleophile active site attacks the C1' of nucleotide 34 to detach the guanine base from the RNA, forming a covalent enzyme-RNA intermediate. The proton acceptor active site deprotonates the incoming PreQ1, allowing a nucleophilic attack on the C1' of the ribose to form the product. After dissociation, two additional enzymatic reactions on the tRNA convert PreQ1 to queuine (Q), resulting in the hypermodified nucleoside queuosine (7-(((4,5-cis-dihydroxy-2-cyclopenten-1-yl)amino)methyl)-7-deazaguanosine). This Aquifex aeolicus (strain VF5) protein is Queuine tRNA-ribosyltransferase.